The chain runs to 906 residues: Envelope glycoprotein B (906 aa).

The first 31 residues, 1 to 31 (MESRIWCLVVCVNLCIVCLGAAVSSSSTSHA), serve as a signal peptide directing secretion. The span at 29-46 (SHATSSTHNGSHTSRTTS) shows a compositional bias: low complexity. The tract at residues 29 to 51 (SHATSSTHNGSHTSRTTSAQTRS) is disordered. The Virion surface portion of the chain corresponds to 32–750 (TSSTHNGSHT…EGVATFLKNP (719 aa)). 4 N-linked (GlcNAc...) asparagine; by host glycosylation sites follow: Asn-37, Asn-68, Asn-73, and Asn-85. Disulfide bonds link Cys-94–Cys-550, Cys-111–Cys-506, Cys-185–Cys-250, Cys-246–Cys-250, and Cys-344–Cys-391. The interval 152–158 (SYAYIYT) is involved in fusion and/or binding to host membrane. Asn-208 carries an N-linked (GlcNAc...) asparagine; by host glycan. The segment at 237–244 (GSTWLYRE) is involved in fusion and/or binding to host membrane. N-linked (GlcNAc...) asparagine; by host glycans are attached at residues Asn-281, Asn-286, Asn-302, Asn-341, Asn-383, Asn-405, Asn-409, Asn-417, Asn-447, Asn-452, Asn-464, Asn-465, Asn-554, and Asn-585. The cysteines at positions 573 and 610 are disulfide-linked. Hydrophobic membrane proximal region regions lie at residues 696–748 (VEDK…TFLK) and 727–747 (VAIG…ATFL). The chain crosses the membrane as a helical span at residues 751-771 (FGAFTIILVAIAVVIITYLIY). Residues 772–906 (TRQRRLCTQP…LKDSDEEENV (135 aa)) are Intravirion-facing. Composition is skewed to polar residues over residues 797-809 (VTSG…SLQA) and 859-876 (RAQQ…GTQD). Disordered regions lie at residues 797–837 (VTSG…TAAP) and 856–906 (AEQR…EENV). Residues 877–886 (KGQKPNLLDR) show a composition bias toward basic and acidic residues. Residues 894–897 (YRHL) carry the Internalization motif motif.

Belongs to the herpesviridae glycoprotein B family. As to quaternary structure, homotrimer; disulfide-linked. Binds to heparan sulfate proteoglycans. Interacts with gH/gL heterodimer. Interacts with host TLR1 and TLR2. Interacts with host C-type lectin CD209/DC-SIGN. Interacts with host ITGB1, EGFR, and PDGFRA. Post-translationally, a proteolytic cleavage by host furin generates two subunits that remain linked by disulfide bonds.

It is found in the virion membrane. The protein resides in the host cell membrane. It localises to the host endosome membrane. Its subcellular location is the host Golgi apparatus membrane. In terms of biological role, envelope glycoprotein that plays a role in host cell entry, cell to-cell virus transmission, and fusion of infected cells. May be involved in the initial attachment via binding to heparan sulfate together with the gM/gN complex that binds heparin with higher affinity. Interacts with host integrin ITGB1, PDGFRA and EGFR that likely serve as postattachment entry receptors. Also participates in the fusion of viral and cellular membranes leading to virus entry into the host cell. Membrane fusion is mediated by the fusion machinery composed at least of gB and the heterodimer gH/gL. This chain is Envelope glycoprotein B, found in Human cytomegalovirus (strain AD169) (HHV-5).